Here is an 841-residue protein sequence, read N- to C-terminus: Protein NLP6 (841 aa).

Residues Glu539 to Ser624 enclose the RWP-RK domain. The tract at residues Asn649–Ala682 is disordered. A compositionally biased stretch (polar residues) spans Pro651–Gln662. One can recognise a PB1 domain in the interval Leu741–Val823.

The protein localises to the nucleus. Probable transcription factor. In Arabidopsis thaliana (Mouse-ear cress), this protein is Protein NLP6 (NLP6).